Here is a 127-residue protein sequence, read N- to C-terminus: Protein ApaG (127 aa).

One can recognise an ApaG domain in the interval 3–127 (ANSPPTIKCN…FRLAIPNILH (125 aa)).

The chain is Protein ApaG from Photobacterium profundum (strain SS9).